We begin with the raw amino-acid sequence, 445 residues long: ATP synthase subunit b-delta (445 aa).

Residues methionine 1–alanine 168 form an ATP synthase subunit b region. A helical membrane pass occupies residues isoleucine 3–valine 23. Positions serine 169–aspartate 445 are ATP synthase subunit delta.

The protein in the N-terminal section; belongs to the ATPase B chain family. This sequence in the C-terminal section; belongs to the ATPase delta chain family. F-type ATPases have 2 components, F(1) - the catalytic core - and F(0) - the membrane proton channel. F(1) has five subunits: alpha(3), beta(3), gamma(1), delta(1), epsilon(1). F(0) has three main subunits: a(1), b(2) and c(10-14). The alpha and beta chains form an alternating ring which encloses part of the gamma chain. F(1) is attached to F(0) by a central stalk formed by the gamma and epsilon chains, while a peripheral stalk is formed by the delta and b chains.

It localises to the cell membrane. F(1)F(0) ATP synthase produces ATP from ADP in the presence of a proton or sodium gradient. F-type ATPases consist of two structural domains, F(1) containing the extramembraneous catalytic core and F(0) containing the membrane proton channel, linked together by a central stalk and a peripheral stalk. During catalysis, ATP synthesis in the catalytic domain of F(1) is coupled via a rotary mechanism of the central stalk subunits to proton translocation. Its function is as follows. This fusion protein includes a component of the F(0) channel (subunit b) and of the F(1) subunit (subunit delta). Two copies of subunit b and one of delta together form the peripheral 'stator' stalk which links F(1) to F(0). In Mycolicibacterium vanbaalenii (strain DSM 7251 / JCM 13017 / BCRC 16820 / KCTC 9966 / NRRL B-24157 / PYR-1) (Mycobacterium vanbaalenii), this protein is ATP synthase subunit b-delta (atpFH).